We begin with the raw amino-acid sequence, 364 residues long: Fructose-bisphosphate aldolase B (364 aa).

Ala2 is subject to N-acetylalanine. The residue at position 13 (Lys13) is an N6-succinyllysine. Ser36 carries the post-translational modification Phosphoserine. Thr39 is subject to Phosphothreonine. A beta-D-fructose 1,6-bisphosphate-binding site is contributed by Arg43. Thr119 carries the post-translational modification Phosphothreonine. Lys121 carries the post-translational modification N6-succinyllysine. The residue at position 132 (Ser132) is a Phosphoserine. Glu188 serves as the catalytic Proton acceptor. Lys230 serves as the catalytic Schiff-base intermediate with dihydroxyacetone-P. 4 positions are modified to phosphoserine: Ser272, Ser276, Ser299, and Ser301. 272 to 274 (SGG) provides a ligand contact to beta-D-fructose 1,6-bisphosphate. Arg304 contacts beta-D-fructose 1,6-bisphosphate. Ser309 is modified (phosphoserine). N6-succinyllysine is present on Lys317.

This sequence belongs to the class I fructose-bisphosphate aldolase family. As to quaternary structure, homotetramer. Interacts with BBS1, BBS2, BBS4 and BBS7. Forms a ternary complex with G6PD and TP53; this interaction is direct.

Its subcellular location is the cytoplasm. The protein resides in the cytosol. The protein localises to the cytoskeleton. It is found in the microtubule organizing center. It localises to the centrosome. Its subcellular location is the centriolar satellite. It catalyses the reaction beta-D-fructose 1,6-bisphosphate = D-glyceraldehyde 3-phosphate + dihydroxyacetone phosphate. The enzyme catalyses beta-D-fructose 1-phosphate = D-glyceraldehyde + dihydroxyacetone phosphate. The protein operates within carbohydrate degradation; glycolysis; D-glyceraldehyde 3-phosphate and glycerone phosphate from D-glucose: step 4/4. It functions in the pathway carbohydrate biosynthesis; gluconeogenesis. It participates in carbohydrate metabolism; fructose metabolism. Its function is as follows. Catalyzes the aldol cleavage of fructose 1,6-biphosphate to form two triosephosphates dihydroxyacetone phosphate and D-glyceraldehyde 3-phosphate in glycolysis as well as the reverse stereospecific aldol addition reaction in gluconeogenesis. In fructolysis, metabolizes fructose 1-phosphate derived from the phosphorylation of dietary fructose by fructokinase into dihydroxyacetone phosphate and D-glyceraldehyde. Acts as an adapter independently of its enzymatic activity, exerts a tumor suppressor role by stabilizing the ternary complex with G6PD and TP53 to inhibit G6PD activity and keep oxidative pentose phosphate metabolism in check. The polypeptide is Fructose-bisphosphate aldolase B (ALDOB) (Ovis aries (Sheep)).